A 292-amino-acid polypeptide reads, in one-letter code: Inhibitory synaptic factor 1 (292 aa).

The segment at 1 to 25 is disordered; sequence MNIRGAPDLGQPSDDPNSGGERERI. A coiled-coil region spans residues 30–63; it reads KMVIGQLEGILRELKEVAKELREVVSQIDKLTSD. Residues 120–292 are disordered; sequence TPSDSVDGPE…ATKQKAKGKN (173 aa). A compositionally biased stretch (basic and acidic residues) spans 180–192; sequence GTRERVRFSDKVL. Acidic residues predominate over residues 198 to 216; it reads CDDEEGDGEEGEEEEEGDL. The span at 263 to 285 shows a compositional bias: polar residues; sequence RNSSTQTVSDKSTQTVLPYTATK.

The protein belongs to the INSYN1 family. As to quaternary structure, interacts with GPHN.

The protein resides in the postsynaptic density. Functionally, component of the protein machinery at the inhibitory synapses, probably acting as a scaffold. Inhibitory synapses dampen neuronal activity through postsynaptic hyperpolarization. This synaptic inhibition is fundamental for the functioning of the central nervous system, shaping and orchestrating the flow of information through neuronal networks to generate a precise neural code. The sequence is that of Inhibitory synaptic factor 1 (Insyn1) from Mus musculus (Mouse).